We begin with the raw amino-acid sequence, 254 residues long: Triosephosphate isomerase (254 aa).

9 to 11 (NWK) lines the substrate pocket. His-95 functions as the Electrophile in the catalytic mechanism. Residue Glu-167 is the Proton acceptor of the active site. Residues Gly-173, Ser-213, and 234 to 235 (GG) each bind substrate.

The protein belongs to the triosephosphate isomerase family. As to quaternary structure, homodimer.

The protein resides in the cytoplasm. It catalyses the reaction D-glyceraldehyde 3-phosphate = dihydroxyacetone phosphate. It participates in carbohydrate biosynthesis; gluconeogenesis. The protein operates within carbohydrate degradation; glycolysis; D-glyceraldehyde 3-phosphate from glycerone phosphate: step 1/1. In terms of biological role, involved in the gluconeogenesis. Catalyzes stereospecifically the conversion of dihydroxyacetone phosphate (DHAP) to D-glyceraldehyde-3-phosphate (G3P). The protein is Triosephosphate isomerase of Roseiflexus castenholzii (strain DSM 13941 / HLO8).